The chain runs to 509 residues: Cation transporter HKT2;4 (509 aa).

Over 1-32 the chain is Cytoplasmic; sequence MPIRLHIFVSSARHAINSSALICRFIAFHLSP. Transmembrane regions (helical) follow at residues 33–53 and 96–116; these read LLIHLSYFLIIDVLGFVALVV and VLTLLMFLGSEMFLSFLGLVL. Over 117 to 164 the chain is Cytoplasmic; the sequence is ESSKQNKHDPENRRVSSVTVCEQSHLEEAIPQTPSMNSTDIKRSCHKY. The next 2 membrane-spanning stretches (helical) occupy residues 165-185 and 237-257; these read LVFVVLAYMIIILVTGSLLVF and GLLLLLIGQILAGSTLLPMFL. The Cytoplasmic segment spans residues 258-296; it reads RLVIWALRGLRLAKAEEPDFMMNNSSSVGFSHLLPNLQT. A run of 2 helical transmembrane segments spans residues 297-317 and 353-373; these read IFLAAVEVAFVGMTVILFCCL and CSLVAPAALVLFMVMMYTPSL. Residues 374-400 lie on the Cytoplasmic side of the membrane; it reads TKLFSACQDHKQIGPESDDRTSKGKPF. A run of 2 helical transmembrane segments spans residues 401-421 and 476-496; these read LKTMAFSPLAFNTTVIMLVCI and SFSGWWSEPGKLILVLAMLYG. The Cytoplasmic segment spans residues 497 to 509; sequence RLNSKDSTSARTR.

It belongs to the TrkH potassium transport family. HKT (TC 2.A.38.3) subfamily. In terms of tissue distribution, expressed in spikelets, leaf blades, leaf sheaths, internodes, nodes, the base of stems and roots.

It is found in the cell membrane. The catalysed reaction is K(+)(in) = K(+)(out). It carries out the reaction Mg(2+)(in) = Mg(2+)(out). The enzyme catalyses Ca(2+)(in) = Ca(2+)(out). Functionally, high-affinity potassium transporter that does not show potassium-sodium cotransport. Potassium transport seems to be independent of sodium. Mediates transport of the divalent cations magnesium and calcium in the absence of competing potassium ions. Selectivity for potassium is dominant over divalent cations, and magnesium and calcium transport may be small and may depend on competing potassium concentrations. The sequence is that of Cation transporter HKT2;4 from Oryza sativa subsp. japonica (Rice).